The chain runs to 198 residues: MAKVLVLYYSMYGHIETMARAVAEGASKVDGAEVVVKRVPETMSPQLFEKAGGKTQTAPVATPQELANYDAIIFGTPTRFGNMSGQMRTFLDQTGGLWASGALYGKLASVFSSTGTGGGQEQTITSTWTTLAHHGMVIVPIGYAAQELFDVSQVRGGTPYGATTIAGGDGSRQPSQEELSIARYQGEYVAGLAVKLNG.

The Flavodoxin-like domain occupies 4–189; the sequence is VLVLYYSMYG…SIARYQGEYV (186 aa). FMN is bound by residues 10–15 and 78–80; these read SMYGHI and TRF. Residue tyrosine 12 coordinates NAD(+). Residue tryptophan 98 participates in substrate binding. FMN contacts are provided by residues 113–118 and histidine 133; that span reads STGTGG.

Belongs to the WrbA family. FMN is required as a cofactor.

The enzyme catalyses a quinone + NADH + H(+) = a quinol + NAD(+). It carries out the reaction a quinone + NADPH + H(+) = a quinol + NADP(+). The chain is NAD(P)H dehydrogenase (quinone) from Escherichia coli O157:H7.